A 275-amino-acid polypeptide reads, in one-letter code: Collectin-10 (275 aa).

Residues 1-25 (MKYGKLWPIGVSVLGVIALHVRVLS) form the signal peptide. The N-linked (GlcNAc...) asparagine glycan is linked to asparagine 30. The segment at 39–76 (THTILPGPKGDDGEAGDTGVLGKLGKDGPKGQKGNKGI) is disordered. A Collagen-like domain is found at 51–110 (GEAGDTGVLGKLGKDGPKGQKGNKGIIGDSGDLGLIGKIGPIGSKGDKGHKGLPGLPGGK). The C-type lectin domain occupies 153–269 (TDEKYYYIVR…CSLTIYFVCE (117 aa)). 2 cysteine pairs are disulfide-bonded: cysteine 174–cysteine 268 and cysteine 246–cysteine 260.

Belongs to the COLEC10/COLEC11 family.

It localises to the secreted. Its function is as follows. Lectin that binds to various sugars: galactose &gt; mannose = fucose &gt; N-acetylglucosamine &gt; N-acetylgalactosamine. In Xenopus tropicalis (Western clawed frog), this protein is Collectin-10 (colec10).